The following is a 131-amino-acid chain: Large ribosomal subunit protein bL17 (131 aa).

This sequence belongs to the bacterial ribosomal protein bL17 family. In terms of assembly, part of the 50S ribosomal subunit. Contacts protein L32.

This is Large ribosomal subunit protein bL17 from Shewanella frigidimarina (strain NCIMB 400).